Here is a 246-residue protein sequence, read N- to C-terminus: Orotidine 5'-phosphate decarboxylase (246 aa).

Substrate contacts are provided by residues aspartate 22, lysine 44, aspartate 71–threonine 80, threonine 130, arginine 191, glutamine 201, glycine 221, and arginine 222. Catalysis depends on lysine 73, which acts as the Proton donor.

It belongs to the OMP decarboxylase family. Type 1 subfamily. As to quaternary structure, homodimer.

It carries out the reaction orotidine 5'-phosphate + H(+) = UMP + CO2. It functions in the pathway pyrimidine metabolism; UMP biosynthesis via de novo pathway; UMP from orotate: step 2/2. Catalyzes the decarboxylation of orotidine 5'-monophosphate (OMP) to uridine 5'-monophosphate (UMP). This is Orotidine 5'-phosphate decarboxylase from Neisseria meningitidis serogroup C (strain 053442).